A 243-amino-acid chain; its full sequence is Probable phosphatase CLD_1129 (243 aa).

Positions 8, 10, 16, 41, 74, 102, 132, 192, and 194 each coordinate Zn(2+).

It belongs to the PHP family. It depends on Zn(2+) as a cofactor.

The polypeptide is Probable phosphatase CLD_1129 (Clostridium botulinum (strain Okra / Type B1)).